Consider the following 527-residue polypeptide: F-box protein SKIP2 (527 aa).

The F-box domain maps to 39-85; the sequence is DRDFTGDLPDECLAHVFQFLGAGDRKRCSLVCKRWLLVDGQSRHRLS.

As to quaternary structure, part of a SCF (ASK-cullin-F-box) protein ligase complex. Interacts with SKP1A/ASK1, SKP1B/ASK2 and ASK11.

The protein localises to the nucleus. It functions in the pathway protein modification; protein ubiquitination. Component of SCF(ASK-cullin-F-box) E3 ubiquitin ligase complexes, which may mediate the ubiquitination and subsequent proteasomal degradation of target proteins. This is F-box protein SKIP2 (SKIP2) from Arabidopsis thaliana (Mouse-ear cress).